The primary structure comprises 147 residues: Receptor activity-modifying protein 3 (147 aa).

The signal sequence occupies residues Met-1–Ala-22. The Extracellular segment spans residues Gln-23–Asp-112. Asn-28, Asn-57, Asn-70, and Asn-102 each carry an N-linked (GlcNAc...) asparagine glycan. 2 disulfide bridges follow: Cys-39-Cys-71 and Cys-56-Cys-103. Residues Pro-113–Val-137 traverse the membrane as a helical segment. At Trp-138 to Leu-147 the chain is on the cytoplasmic side.

The protein belongs to the RAMP family. Heterodimer of CALCRL and RAMP3; interaction induces allosteric modulation of CALCRL function and ligand specificity for adrenomedullin/ADM and intermedin/ADM2. Heterodimer of CALCR and RAMP3; interaction form the receptor complex AMYR3 for amylin/IAPP. Interacts with GPER1.

It is found in the cell membrane. The protein localises to the membrane. Accessory protein that interacts with and modulates the function of G-protein coupled receptors including calcitonin gene-related peptide type 1 receptor (CALCRL), calcitonin receptor (CALCR) and G-protein coupled estrogen receptor 1 (GPER1). Required for the transport of CALCRL and GPER1 receptors to the plasma membrane. Plays a role in cardioprotection by reducing cardiac hypertrophy and perivascular fibrosis in a GPER1-dependent manner. Together with CALCRL, form a receptor complex for adrenomedullin/ADM and intermedin/ADM2. Together with CALCR, act as a receptor complex for amylin/IAPP. The polypeptide is Receptor activity-modifying protein 3 (Rattus norvegicus (Rat)).